The following is a 941-amino-acid chain: Protein translocase subunit SecA (941 aa).

Residues Q87, 105-109, and D524 contribute to the ATP site; that span reads GEGKT. The disordered stretch occupies residues 871–919; that stretch reads DEQPPMPAMEAHKLDPNTGEDQVAQAQSGLAPVAPAKRDPANPATWGKV. The Zn(2+) site is built by C925, C927, C936, and H937.

Belongs to the SecA family. In terms of assembly, monomer and homodimer. Part of the essential Sec protein translocation apparatus which comprises SecA, SecYEG and auxiliary proteins SecDF-YajC and YidC. The cofactor is Zn(2+).

Its subcellular location is the cell inner membrane. The protein localises to the cytoplasm. It carries out the reaction ATP + H2O + cellular proteinSide 1 = ADP + phosphate + cellular proteinSide 2.. Its function is as follows. Part of the Sec protein translocase complex. Interacts with the SecYEG preprotein conducting channel. Has a central role in coupling the hydrolysis of ATP to the transfer of proteins into and across the cell membrane, serving both as a receptor for the preprotein-SecB complex and as an ATP-driven molecular motor driving the stepwise translocation of polypeptide chains across the membrane. This chain is Protein translocase subunit SecA, found in Afipia carboxidovorans (strain ATCC 49405 / DSM 1227 / KCTC 32145 / OM5) (Oligotropha carboxidovorans).